Consider the following 150-residue polypeptide: Suppressor of HU sensitivity involved in recombination protein 1 (150 aa).

As to quaternary structure, component of the SHU complex composed of at least CSM2, PSY3, SHU1 and SHU2.

It localises to the nucleus. Its function is as follows. Plays a role in a RAD51/RAD54-dependent homologous recombination repair (HRR) pathway to repair MMS-induced lesions during S-phase. This chain is Suppressor of HU sensitivity involved in recombination protein 1 (SHU1), found in Saccharomyces cerevisiae (strain ATCC 204508 / S288c) (Baker's yeast).